The primary structure comprises 313 residues: Methionyl-tRNA formyltransferase (313 aa).

The segment at 32-51 (QPDRRKGRGKELQPPPAKRK) is disordered. A (6S)-5,6,7,8-tetrahydrofolate-binding site is contributed by 109-112 (SLLP).

The protein belongs to the Fmt family.

It catalyses the reaction L-methionyl-tRNA(fMet) + (6R)-10-formyltetrahydrofolate = N-formyl-L-methionyl-tRNA(fMet) + (6S)-5,6,7,8-tetrahydrofolate + H(+). Functionally, attaches a formyl group to the free amino group of methionyl-tRNA(fMet). The formyl group appears to play a dual role in the initiator identity of N-formylmethionyl-tRNA by promoting its recognition by IF2 and preventing the misappropriation of this tRNA by the elongation apparatus. This chain is Methionyl-tRNA formyltransferase, found in Natranaerobius thermophilus (strain ATCC BAA-1301 / DSM 18059 / JW/NM-WN-LF).